The sequence spans 368 residues: ATP-dependent (S)-NAD(P)H-hydrate dehydratase (368 aa).

The 345-residue stretch at 13–357 (LFKKVRKIVP…DEVHESFLEL (345 aa)) folds into the YjeF C-terminal domain. (6S)-NADPHX-binding positions include glycine 125 and 178 to 184 (NVNEFSR). Residues 231-235 (KGPHD) and 250-259 (GGLKRSGGQG) each bind ATP. Aspartate 260 contributes to the (6S)-NADPHX binding site.

Belongs to the NnrD/CARKD family. Mg(2+) is required as a cofactor.

The protein localises to the cytoplasm. It catalyses the reaction (6S)-NADHX + ATP = ADP + phosphate + NADH + H(+). The catalysed reaction is (6S)-NADPHX + ATP = ADP + phosphate + NADPH + H(+). Functionally, catalyzes the dehydration of the S-form of NAD(P)HX at the expense of ATP, which is converted to ADP. Together with NAD(P)HX epimerase, which catalyzes the epimerization of the S- and R-forms, the enzyme allows the repair of both epimers of NAD(P)HX, a damaged form of NAD(P)H that is a result of enzymatic or heat-dependent hydration. The chain is ATP-dependent (S)-NAD(P)H-hydrate dehydratase from Aspergillus fumigatus (strain ATCC MYA-4609 / CBS 101355 / FGSC A1100 / Af293) (Neosartorya fumigata).